The following is a 500-amino-acid chain: L-arabinose isomerase (500 aa).

Positions 306, 333, 350, and 450 each coordinate Mn(2+).

The protein belongs to the arabinose isomerase family. In terms of assembly, homohexamer. Mn(2+) is required as a cofactor.

It catalyses the reaction beta-L-arabinopyranose = L-ribulose. It participates in carbohydrate degradation; L-arabinose degradation via L-ribulose; D-xylulose 5-phosphate from L-arabinose (bacterial route): step 1/3. Its function is as follows. Catalyzes the conversion of L-arabinose to L-ribulose. This is L-arabinose isomerase from Escherichia fergusonii (strain ATCC 35469 / DSM 13698 / CCUG 18766 / IAM 14443 / JCM 21226 / LMG 7866 / NBRC 102419 / NCTC 12128 / CDC 0568-73).